We begin with the raw amino-acid sequence, 290 residues long: Cbb3-type cytochrome c oxidase subunit FixP (290 aa).

The helical transmembrane segment at 33–53 (WWVITFYITIVWAIGYWIVYP) threads the bilayer. 2 Cytochrome c domains span residues 109-198 (LARA…RSLS) and 206-287 (YDAA…HSLG). Heme c is bound by residues cysteine 122, cysteine 125, histidine 126, methionine 173, cysteine 219, cysteine 222, histidine 223, and methionine 264.

This sequence belongs to the CcoP / FixP family. Component of the cbb3-type cytochrome c oxidase at least composed of FixN, FixO, FixQ and FixP. The cofactor is heme c.

The protein localises to the cell inner membrane. It participates in energy metabolism; oxidative phosphorylation. C-type cytochrome. Part of the cbb3-type cytochrome c oxidase complex. FixP subunit is required for transferring electrons from donor cytochrome c via its heme groups to FixO subunit. From there, electrons are shuttled to the catalytic binuclear center of FixN subunit where oxygen reduction takes place. The complex also functions as a proton pump. This is Cbb3-type cytochrome c oxidase subunit FixP from Bradyrhizobium sp. (strain ORS 278).